Consider the following 340-residue polypeptide: DNA-directed RNA polymerase subunit alpha (340 aa).

The alpha N-terminal domain (alpha-NTD) stretch occupies residues 1–236; it reads MLSLSKNWNT…EQLQLFISFE (236 aa). The alpha C-terminal domain (alpha-CTD) stretch occupies residues 251 to 340; sequence FSPYLLKRVD…LSKRYEDSYN (90 aa).

This sequence belongs to the RNA polymerase alpha chain family. As to quaternary structure, homodimer. The RNAP catalytic core consists of 2 alpha, 1 beta, 1 beta' and 1 omega subunit. When a sigma factor is associated with the core the holoenzyme is formed, which can initiate transcription.

The enzyme catalyses RNA(n) + a ribonucleoside 5'-triphosphate = RNA(n+1) + diphosphate. In terms of biological role, DNA-dependent RNA polymerase catalyzes the transcription of DNA into RNA using the four ribonucleoside triphosphates as substrates. This is DNA-directed RNA polymerase subunit alpha from Rickettsia rickettsii (strain Iowa).